The following is a 472-amino-acid chain: Nuclear hormone receptor family member nhr-2 (472 aa).

4 stretches are compositionally biased toward polar residues: residues 57-83 (TATN…LSQI), 90-112 (NDTI…HNQP), 138-147 (LSSTQSSPDN), and 159-171 (VRRN…SAST). 2 disordered regions span residues 57–112 (TATN…HNQP) and 138–184 (LSST…RTNT). The segment at residues 215–297 (KDRCMVCGDN…VGMNRDNVRV (83 aa)) is a DNA-binding region (nuclear receptor). NR C4-type zinc fingers lie at residues 218 to 238 (CMVC…CEGC) and 267 to 285 (CAAN…FAKC).

Belongs to the nuclear hormone receptor family.

It is found in the nucleus. In terms of biological role, orphan nuclear receptor. This chain is Nuclear hormone receptor family member nhr-2 (nhr-2), found in Caenorhabditis elegans.